The chain runs to 238 residues: 2-C-methyl-D-erythritol 4-phosphate cytidylyltransferase (238 aa).

Belongs to the IspD/TarI cytidylyltransferase family. IspD subfamily.

It carries out the reaction 2-C-methyl-D-erythritol 4-phosphate + CTP + H(+) = 4-CDP-2-C-methyl-D-erythritol + diphosphate. The protein operates within isoprenoid biosynthesis; isopentenyl diphosphate biosynthesis via DXP pathway; isopentenyl diphosphate from 1-deoxy-D-xylulose 5-phosphate: step 2/6. Catalyzes the formation of 4-diphosphocytidyl-2-C-methyl-D-erythritol from CTP and 2-C-methyl-D-erythritol 4-phosphate (MEP). In Aliivibrio fischeri (strain MJ11) (Vibrio fischeri), this protein is 2-C-methyl-D-erythritol 4-phosphate cytidylyltransferase.